Here is a 364-residue protein sequence, read N- to C-terminus: Protein IncC (364 aa).

Basic and acidic residues-rich tracts occupy residues 1–10 (MGVIHEETAY), 26–42 (ADHR…EATG), and 89–100 (HRPEVGSGRQEK). Disordered regions lie at residues 1–63 (MGVI…ASRV) and 75–102 (VRAG…EKTG).

The protein belongs to the ParA family.

Functionally, this is one of the proteins encoded by the trfB operon; it is involved in plasmid maintenance and replication. This is Protein IncC (incC) from Escherichia coli.